The primary structure comprises 302 residues: GLABROUS1 enhancer-binding protein (302 aa).

Disordered stretches follow at residues 1–55 and 158–229; these read MVTP…MKKK and GQGD…NDDD. Residue S27 is modified to Phosphoserine. Residues 180-195 are compositionally biased toward basic and acidic residues; it reads RTNESGEEMLKEHEEE. Positions 208–217 are enriched in polar residues; sequence AKTTENGTSS. A non-canonical leucine-zipper region spans residues 270–291; sequence LSDEWKALCVEETRFNIKKLRF.

The protein belongs to the GeBP family. Homo- and heterodimers. Interacts with GPL1, GPL2 and GPL3. Interacts with KIN10, KIN11 and FLZ4. Interacts with KIN10 and KIN11 via its N-terminal part. Interacts with GPL1 and GPL3 via its C-terminal part. Expressed in the apical meristem and young leaf primordia. Not detected in emerging or mature leaves. Detected in the vascular tissues of cotyledons and leaves, in hydathodes and at the base of flowers and siliques, but not in roots.

It localises to the nucleus. It is found in the nucleolus. Functionally, DNA-binding protein, which specifically recognizes the GL1 enhancer sequence. May be involved in leaf initiation. May play redundant roles with GPL1 and GPL2 in cytokinin responses by regulating the transcript levels of type-A ARR response genes. Involved in stress responses. Plays a repressive role in cell expansion by counteracting the positive role of CPR5 in this process, but does not regulate cell proliferation or endoreduplication. May play a role in plant defense. This is GLABROUS1 enhancer-binding protein from Arabidopsis thaliana (Mouse-ear cress).